We begin with the raw amino-acid sequence, 545 residues long: MAKQLIFDQQARTALKHGIDTLALAVKTTLGPRGRNVALDKKWGAPTVTHDGVSVAKEIELKDPFANLGVQLLKQAAVKTNDVAGDGTTTATVLAQAIINEGLKLVAAGANPMLLKRGLDKGGQALVARIKEQAITLKTRDEIRNVATISAQDAEVGELLATVMDKIGRDGVVTVEEGKSTHLEHELVEGMQFDRGYISPYFITDSARMEAVLDEPYILITDKKISAIKDLLPILEAVLSSGKKDLLVIAEDVDGEALATLVVNKLRGTLNALAVKAPGFGDRRKAMLQDIAILTGGTVISEEIGRKLESATLQDLGRARRVKADKDNTVIVEGHGDKQAIQARIAQLKQQIETTTSDYDREKLQERVAKLSGGVAVIKVGAPTEPAMKERKARVEDALNATRAAVEEGIVPGGGVALLNAIPALDNVTTQFEEERMALNVLRRALEEPLRQLATNAGEDGSVVVENVRNEQRKHNNNHYGYDVMTGTYVDLMQAGIIDPAKVVRSALENAISVAGMVLTTEALIVDAPEPKKKNGTPPMPDDDF.

Residues 29 to 32 (TLGP), 86 to 90 (DGTTT), Gly414, and Asp499 contribute to the ATP site.

It belongs to the chaperonin (HSP60) family. As to quaternary structure, forms a cylinder of 14 subunits composed of two heptameric rings stacked back-to-back. Interacts with the co-chaperonin GroES.

The protein localises to the cytoplasm. It carries out the reaction ATP + H2O + a folded polypeptide = ADP + phosphate + an unfolded polypeptide.. In terms of biological role, together with its co-chaperonin GroES, plays an essential role in assisting protein folding. The GroEL-GroES system forms a nano-cage that allows encapsulation of the non-native substrate proteins and provides a physical environment optimized to promote and accelerate protein folding. The sequence is that of Chaperonin GroEL 2 from Chloroflexus aurantiacus (strain ATCC 29366 / DSM 635 / J-10-fl).